We begin with the raw amino-acid sequence, 223 residues long: 3,4-dihydroxy-2-butanone 4-phosphate synthase (223 aa).

D-ribulose 5-phosphate-binding positions include Arg-47–Glu-48, Asp-52, Arg-160–Thr-164, and Glu-184. Glu-48 serves as a coordination point for Mg(2+). His-163 serves as a coordination point for Mg(2+).

This sequence belongs to the DHBP synthase family. Homodimer. Mg(2+) is required as a cofactor. Mn(2+) serves as cofactor.

It catalyses the reaction D-ribulose 5-phosphate = (2S)-2-hydroxy-3-oxobutyl phosphate + formate + H(+). It functions in the pathway cofactor biosynthesis; riboflavin biosynthesis; 2-hydroxy-3-oxobutyl phosphate from D-ribulose 5-phosphate: step 1/1. Functionally, catalyzes the conversion of D-ribulose 5-phosphate to formate and 3,4-dihydroxy-2-butanone 4-phosphate. This is 3,4-dihydroxy-2-butanone 4-phosphate synthase from Cupriavidus pinatubonensis (strain JMP 134 / LMG 1197) (Cupriavidus necator (strain JMP 134)).